Consider the following 1493-residue polypeptide: Pleckstrin homology domain-containing family H member 2 (1493 aa).

A coiled-coil region spans residues 20–175 (LESQLMKFRV…LQEVQGKKSS (156 aa)). Disordered stretches follow at residues 202–230 (SPPQ…DMEE), 245–335 (NNRG…SSSI), 363–439 (LNSP…LPPP), and 613–705 (SSSP…EPLE). The segment covering 208 to 230 (KSEEMSKISSKEPEFTEGKDMEE) has biased composition (basic and acidic residues). Composition is skewed to polar residues over residues 245–260 (NNRG…CGSE) and 267–281 (TSFA…NSGA). Residues 374-388 (LSKKEQDSSSDELNK) show a composition bias toward basic and acidic residues. Composition is skewed to polar residues over residues 389 to 409 (KFQS…TPSP), 421 to 432 (NSLSGKGTQLVP), and 676 to 698 (STDT…SSDN). PH domains are found at residues 703–797 (PLEK…NVLR) and 811–919 (KPTM…VAAG). A MyTH4 domain is found at 955–1110 (HSKEGIISPL…PSRMEILSTL (156 aa)). Positions 1121–1451 (FSIPVHFMNG…SYINNFHQQK (331 aa)) constitute an FERM domain. A disordered region spans residues 1474–1493 (MMGSQPLLSSSRPTKGPTLL).

In terms of assembly, self-associates. Interacts with TGFB1I1. As to expression, kidney. Reduced expression in patients with focal segmental glomerulosclerosis.

It is found in the cytoplasm. It localises to the cytoskeleton. Its subcellular location is the cell membrane. The protein localises to the cell projection. The protein resides in the lamellipodium. Functionally, in the kidney glomerulus may play a role in linking podocyte foot processes to the glomerular basement membrane. May be involved in stabilization of F-actin by attenuating its depolymerization. Can recruit TGFB1I1 from focal adhesions to podocyte lamellipodia. This chain is Pleckstrin homology domain-containing family H member 2 (PLEKHH2), found in Homo sapiens (Human).